A 334-amino-acid polypeptide reads, in one-letter code: Glyceraldehyde-3-phosphate dehydrogenase (334 aa).

Residues Arg-12–Ile-13, Asp-35, Arg-79, and Ser-121 contribute to the NAD(+) site. D-glyceraldehyde 3-phosphate contacts are provided by residues Ser-152 to Thr-154, Thr-183, Arg-198, Thr-211 to Gly-212, and Arg-234. Residue Cys-153 is the Nucleophile of the active site. Asn-315 contributes to the NAD(+) binding site.

This sequence belongs to the glyceraldehyde-3-phosphate dehydrogenase family. Homotetramer.

Its subcellular location is the cytoplasm. The catalysed reaction is D-glyceraldehyde 3-phosphate + phosphate + NAD(+) = (2R)-3-phospho-glyceroyl phosphate + NADH + H(+). It functions in the pathway carbohydrate degradation; glycolysis; pyruvate from D-glyceraldehyde 3-phosphate: step 1/5. In terms of biological role, catalyzes the oxidative phosphorylation of glyceraldehyde 3-phosphate (G3P) to 1,3-bisphosphoglycerate (BPG) using the cofactor NAD. The first reaction step involves the formation of a hemiacetal intermediate between G3P and a cysteine residue, and this hemiacetal intermediate is then oxidized to a thioester, with concomitant reduction of NAD to NADH. The reduced NADH is then exchanged with the second NAD, and the thioester is attacked by a nucleophilic inorganic phosphate to produce BPG. This chain is Glyceraldehyde-3-phosphate dehydrogenase (gap), found in Corynebacterium glutamicum (strain ATCC 13032 / DSM 20300 / JCM 1318 / BCRC 11384 / CCUG 27702 / LMG 3730 / NBRC 12168 / NCIMB 10025 / NRRL B-2784 / 534).